Consider the following 200-residue polypeptide: Recombination protein RecR (200 aa).

The C4-type zinc finger occupies 57–72 (CRQCRTLTEQELCPQC). A Toprim domain is found at 80–175 (TQLCVVEGPT…AATRIAHGVP (96 aa)).

The protein belongs to the RecR family.

Functionally, may play a role in DNA repair. It seems to be involved in an RecBC-independent recombinational process of DNA repair. It may act with RecF and RecO. The sequence is that of Recombination protein RecR from Pseudomonas putida (strain GB-1).